Reading from the N-terminus, the 294-residue chain is Transmembrane protein 178B (294 aa).

An N-terminal signal peptide occupies residues 1 to 23 (MAAGRLLLYTGLSLALCALGMLA). N-linked (GlcNAc...) asparagine glycosylation is found at asparagine 148 and asparagine 152. The next 3 helical transmembrane spans lie at 172–192 (AGFM…GVLG), 206–226 (LLFL…VAGI), and 252–272 (MFCA…CTLA).

It belongs to the TMEM178 family.

The protein resides in the membrane. The sequence is that of Transmembrane protein 178B (TMEM178B) from Homo sapiens (Human).